The sequence spans 178 residues: Crossover junction endodeoxyribonuclease RuvC (178 aa).

Active-site residues include Asp-18, Glu-78, and Asp-150. Mg(2+) is bound by residues Asp-18, Glu-78, and Asp-150.

Belongs to the RuvC family. As to quaternary structure, homodimer which binds Holliday junction (HJ) DNA. The HJ becomes 2-fold symmetrical on binding to RuvC with unstacked arms; it has a different conformation from HJ DNA in complex with RuvA. In the full resolvosome a probable DNA-RuvA(4)-RuvB(12)-RuvC(2) complex forms which resolves the HJ. Mg(2+) is required as a cofactor.

Its subcellular location is the cytoplasm. The catalysed reaction is Endonucleolytic cleavage at a junction such as a reciprocal single-stranded crossover between two homologous DNA duplexes (Holliday junction).. Its function is as follows. The RuvA-RuvB-RuvC complex processes Holliday junction (HJ) DNA during genetic recombination and DNA repair. Endonuclease that resolves HJ intermediates. Cleaves cruciform DNA by making single-stranded nicks across the HJ at symmetrical positions within the homologous arms, yielding a 5'-phosphate and a 3'-hydroxyl group; requires a central core of homology in the junction. The consensus cleavage sequence is 5'-(A/T)TT(C/G)-3'. Cleavage occurs on the 3'-side of the TT dinucleotide at the point of strand exchange. HJ branch migration catalyzed by RuvA-RuvB allows RuvC to scan DNA until it finds its consensus sequence, where it cleaves and resolves the cruciform DNA. This Granulibacter bethesdensis (strain ATCC BAA-1260 / CGDNIH1) protein is Crossover junction endodeoxyribonuclease RuvC.